A 375-amino-acid chain; its full sequence is Growth/differentiation factor 8 (375 aa).

Positions 1 to 23 (MQKLAVYVYIYLFMQILVHPVAL) are cleaved as a signal peptide. The propeptide occupies 24–266 (DGSSQPTENA…VTDTPKRSRR (243 aa)). Asn-71 is a glycosylation site (N-linked (GlcNAc...) asparagine). Intrachain disulfides connect Cys-272-Cys-282, Cys-281-Cys-340, Cys-309-Cys-372, and Cys-313-Cys-374.

Belongs to the TGF-beta family. Homodimer; disulfide-linked.

It localises to the secreted. In terms of biological role, acts specifically as a negative regulator of skeletal muscle growth. In Meleagris gallopavo (Wild turkey), this protein is Growth/differentiation factor 8 (MSTN).